A 479-amino-acid polypeptide reads, in one-letter code: Catalase easC (479 aa).

Residues 1–13 (MASQVSLTAQGSG) are compositionally biased toward polar residues. Residues 1-28 (MASQVSLTAQGSGLSAPLNGPEHLTSTT) are disordered. The active site involves histidine 53. Tyrosine 343 serves as a coordination point for heme. The tract at residues 365-385 (HAANDAPKTKKPAVPLQKQSR) is disordered.

The protein belongs to the catalase family. Requires heme as cofactor.

It functions in the pathway alkaloid biosynthesis; ergot alkaloid biosynthesis. Catalase; part of the gene cluster that mediates the biosynthesis of fungal ergot alkaloid. DmaW catalyzes the first step of ergot alkaloid biosynthesis by condensing dimethylallyl diphosphate (DMAP) and tryptophan to form 4-dimethylallyl-L-tryptophan. The second step is catalyzed by the methyltransferase easF that methylates 4-dimethylallyl-L-tryptophan in the presence of S-adenosyl-L-methionine, resulting in the formation of 4-dimethylallyl-L-abrine. The catalase easC and the FAD-dependent oxidoreductase easE then transform 4-dimethylallyl-L-abrine to chanoclavine-I which is further oxidized by easD in the presence of NAD(+), resulting in the formation of chanoclavine-I aldehyde. Agroclavine dehydrogenase easG then mediates the conversion of chanoclavine-I aldehyde to agroclavine via a non-enzymatic adduct reaction: the substrate is an iminium intermediate that is formed spontaneously from chanoclavine-I aldehyde in the presence of glutathione. Further conversion of agroclavine to paspalic acid is a two-step process involving oxidation of agroclavine to elymoclavine and of elymoclavine to paspalic acid, the second step being performed by the elymoclavine oxidase cloA. However, cloA does not encode a functional enzyme indicating that C.fusiformis terminates its ergot alkaloid pathway at elymoclavine. The protein is Catalase easC of Claviceps fusiformis (Ergot fungus).